We begin with the raw amino-acid sequence, 338 residues long: Acyl-CoA:acyl-CoA alkyltransferase (338 aa).

Mn(2+) is bound by residues histidine 18 and aspartate 56. Glutamate 97 serves as the catalytic Proton acceptor. Residue cysteine 123 is the Acyl-thioester intermediate of the active site.

The protein belongs to the thiolase-like superfamily. OleA family. Homodimer. Weakly associates with the OleBCD complex.

The protein resides in the cytoplasm. It carries out the reaction a 1,2-saturated acyl-CoA + an acyl-CoA + H2O = an (R)-2-alkyl-3-oxoalkanoate + 2 CoA + H(+). Inhibited by cerulenin. In terms of biological role, involved in olefin biosynthesis. Catalyzes a non-decarboxylative head-to-head Claisen condensation of two acyl-CoA molecules, generating an (R)-2-alkyl-3-oxoalkanoate. Is active with fatty acyl-CoA substrates that ranged from C(8) to C(16) in length, and is the most active with palmitoyl-CoA and myristoyl-CoA. In Xanthomonas campestris pv. campestris (strain ATCC 33913 / DSM 3586 / NCPPB 528 / LMG 568 / P 25), this protein is Acyl-CoA:acyl-CoA alkyltransferase.